The chain runs to 207 residues: Germin-like protein 1 (207 aa).

The N-terminal stretch at 1 to 17 (MLRIIFLLSLLFALSND) is a signal peptide. A disulfide bridge connects residues cysteine 23 and cysteine 38. Residues 51–197 (FSLGTPGNTT…TTFLPPATVK (147 aa)) enclose the Cupin type-1 domain. A glycan (N-linked (GlcNAc...) asparagine) is linked at asparagine 58. The Mn(2+) site is built by histidine 99, histidine 101, glutamate 106, and histidine 145.

It belongs to the germin family. Oligomer (believed to be a pentamer but probably hexamer).

The protein resides in the secreted. It localises to the extracellular space. The protein localises to the apoplast. In terms of biological role, may play a role in plant defense. Probably has no oxalate oxidase activity even if the active site is conserved. This chain is Germin-like protein 1 (GER1), found in Brassica napus (Rape).